The chain runs to 208 residues: Large ribosomal subunit protein uL4 (208 aa).

A disordered region spans residues 45–77 (RQGTHKAKERAEIKGSTRKIKKQKGTGTARAGS).

This sequence belongs to the universal ribosomal protein uL4 family. Part of the 50S ribosomal subunit.

Its function is as follows. One of the primary rRNA binding proteins, this protein initially binds near the 5'-end of the 23S rRNA. It is important during the early stages of 50S assembly. It makes multiple contacts with different domains of the 23S rRNA in the assembled 50S subunit and ribosome. In terms of biological role, forms part of the polypeptide exit tunnel. This is Large ribosomal subunit protein uL4 from Christiangramia forsetii (strain DSM 17595 / CGMCC 1.15422 / KT0803) (Gramella forsetii).